A 410-amino-acid chain; its full sequence is Proteasomal ubiquitin receptor ADRM1 (410 aa).

The Pru domain maps to 17 to 130 (SSSKYLVEFR…RKVNEYLNNP (114 aa)). S18 carries the phosphoserine modification. Residues 191–257 (GSGGPATSSS…PAAQTPSLPA (67 aa)) show a composition bias toward low complexity. 2 disordered regions span residues 191-264 (GSGG…SSTQ) and 381-410 (FAKA…MSLD). The DEUBAD domain occupies 281–395 (PAMPTEGSGV…EGSDSKTDDG (115 aa)). Positions 381–401 (FAKAMEGSDSKTDDGDSKDKK) are enriched in basic and acidic residues.

This sequence belongs to the ADRM1 family. In terms of assembly, component of the 19S proteasome regulatory particle complex. The 26S proteasome consists of a 20S core particle (CP) and two 19S regulatory subunits (RP).

It localises to the cytoplasm. The protein resides in the nucleus. Functionally, component of the 26S proteasome, a multiprotein complex involved in the ATP-dependent degradation of ubiquitinated proteins. This complex plays a key role in the maintenance of protein homeostasis by removing misfolded or damaged proteins, which could impair cellular functions, and by removing proteins whose functions are no longer required. Therefore, the proteasome participates in numerous cellular processes, including cell cycle progression, apoptosis, or DNA damage repair. Within the complex, functions as a proteasomal ubiquitin receptor. The chain is Proteasomal ubiquitin receptor ADRM1 (adrm1b) from Danio rerio (Zebrafish).